The sequence spans 399 residues: Tyrosine--tRNA ligase (399 aa).

The short motif at 42–51 is the 'HIGH' region element; that stretch reads PTAPDLHLGH. The 'KMSKS' region signature appears at 226 to 230; it reads KMSKS. Lysine 229 is an ATP binding site. In terms of domain architecture, S4 RNA-binding spans 337 to 398; that stretch reads IAIANLLKDA…GKRKFARITV (62 aa).

It belongs to the class-I aminoacyl-tRNA synthetase family. TyrS type 2 subfamily. In terms of assembly, homodimer.

It is found in the cytoplasm. The enzyme catalyses tRNA(Tyr) + L-tyrosine + ATP = L-tyrosyl-tRNA(Tyr) + AMP + diphosphate + H(+). Its function is as follows. Catalyzes the attachment of tyrosine to tRNA(Tyr) in a two-step reaction: tyrosine is first activated by ATP to form Tyr-AMP and then transferred to the acceptor end of tRNA(Tyr). The polypeptide is Tyrosine--tRNA ligase (Colwellia psychrerythraea (strain 34H / ATCC BAA-681) (Vibrio psychroerythus)).